Consider the following 389-residue polypeptide: Na(+)/H(+) antiporter NhaA (389 aa).

The next 11 membrane-spanning stretches (helical) occupy residues 17 to 37 (ILLL…LAGL), 59 to 79 (LLLW…GLEV), 95 to 115 (SLPT…YLLF), 124 to 144 (AGWA…MALL), 154 to 174 (VFLL…IALF), 177 to 197 (TDLS…LVAL), 213 to 233 (LVLW…GVII), 261 to 281 (FLIL…NMSL), 287 to 307 (PVPV…VMLF), 328 to 348 (IAPV…IASL), and 363 to 383 (LGTL…LSKV).

This sequence belongs to the NhaA Na(+)/H(+) (TC 2.A.33) antiporter family.

The protein resides in the cell inner membrane. It catalyses the reaction Na(+)(in) + 2 H(+)(out) = Na(+)(out) + 2 H(+)(in). Functionally, na(+)/H(+) antiporter that extrudes sodium in exchange for external protons. The sequence is that of Na(+)/H(+) antiporter NhaA from Shewanella sp. (strain MR-7).